Reading from the N-terminus, the 481-residue chain is tRNA:m(4)X modification enzyme TRM13 homolog (481 aa).

An N-acetylalanine modification is found at alanine 2. A CHHC U11-48K-type zinc finger spans residues 56-83; it reads RILCPLDPKHTVYEDQLAKHLKKCNSRE. Residues cysteine 59, histidine 65, histidine 75, and cysteine 79 each coordinate Zn(2+). Residues 113 to 140 are a coiled coil; that stretch reads SLSEEQLEKLIKKLRKASEGLNSTLKDH. Positions 381–408 are disordered; sequence ETSNSTTKRQDNQNDDSEEHDDGGYRIT.

It belongs to the methyltransferase TRM13 family.

It catalyses the reaction cytidine(4) in tRNA(Pro) + S-adenosyl-L-methionine = 2'-O-methylcytidine(4) in tRNA(Pro) + S-adenosyl-L-homocysteine + H(+). The catalysed reaction is cytidine(4) in tRNA(Gly)(GCC) + S-adenosyl-L-methionine = 2'-O-methylcytidine(4) in tRNA(Gly)(GCC) + S-adenosyl-L-homocysteine + H(+). It carries out the reaction adenosine(4) in tRNA(His) + S-adenosyl-L-methionine = 2'-O-methyladenosine(4) in tRNA(His) + S-adenosyl-L-homocysteine + H(+). Functionally, tRNA methylase which 2'-O-methylates cytidine(4) in tRNA(Pro) and tRNA(Gly)(GCC), and adenosine(4) in tRNA(His). This Homo sapiens (Human) protein is tRNA:m(4)X modification enzyme TRM13 homolog (TRMT13).